Reading from the N-terminus, the 1321-residue chain is Lysine-specific demethylase 3A (1321 aa).

Phosphoserine is present on residues Ser264 and Ser325. 3 disordered regions span residues 307–336 (ATPPSKDPRQQSTPQAANSPPNLGAKIPQG), 383–402 (LTEPKGSCTQPKTNTDQENR), and 438–472 (KHLEHAPSPSDVSNAPEVKAGVNSDSPNNCSGKKV). Positions 316 to 327 (QQSTPQAANSPP) are enriched in polar residues. Ser445 carries the phosphoserine modification. The C6-type zinc finger occupies 662–687 (CDVCDTTIFNLHWVCPRCGFGVCVDC). Phosphoserine is present on Ser766. Residues 885–889 (LRNLL) carry the LXXLL motif motif. At Lys895 the chain carries N6-acetyllysine. The JmjC domain maps to 1058-1281 (MPSRFDDLMA…HCFWLTQEFR (224 aa)). His1120, Asp1122, and His1249 together coordinate Fe cation.

This sequence belongs to the JHDM2 histone demethylase family. Interacts with VRK1. Requires Fe(2+) as cofactor.

It localises to the cytoplasm. The protein resides in the nucleus. It catalyses the reaction N(6),N(6)-dimethyl-L-lysyl(9)-[histone H3] + 2 2-oxoglutarate + 2 O2 = L-lysyl(9)-[histone H3] + 2 formaldehyde + 2 succinate + 2 CO2. Functionally, histone demethylase that specifically demethylates 'Lys-9' of histone H3, thereby playing a central role in histone code. Preferentially demethylates mono- and dimethylated H3 'Lys-9' residue, with a preference for dimethylated residue, while it has weak or no activity on trimethylated H3 'Lys-9'. Demethylation of Lys residue generates formaldehyde and succinate. Involved in hormone-dependent transcriptional activation, by participating in recruitment to androgen-receptor target genes, resulting in H3 'Lys-9' demethylation and transcriptional activation. Involved in spermatogenesis by regulating expression of target genes such as PRM1 and TNP1 which are required for packaging and condensation of sperm chromatin. Involved in obesity resistance through regulation of metabolic genes such as PPARA and UCP1. The sequence is that of Lysine-specific demethylase 3A (KDM3A) from Homo sapiens (Human).